We begin with the raw amino-acid sequence, 127 residues long: Aspartate 1-decarboxylase (127 aa).

Serine 25 (schiff-base intermediate with substrate; via pyruvic acid) is an active-site residue. Pyruvic acid (Ser) is present on serine 25. Residue threonine 57 coordinates substrate. The active-site Proton donor is tyrosine 58. Residue 73 to 75 (GAA) participates in substrate binding.

This sequence belongs to the PanD family. Heterooctamer of four alpha and four beta subunits. Pyruvate is required as a cofactor. Post-translationally, is synthesized initially as an inactive proenzyme, which is activated by self-cleavage at a specific serine bond to produce a beta-subunit with a hydroxyl group at its C-terminus and an alpha-subunit with a pyruvoyl group at its N-terminus.

It is found in the cytoplasm. The catalysed reaction is L-aspartate + H(+) = beta-alanine + CO2. Its pathway is cofactor biosynthesis; (R)-pantothenate biosynthesis; beta-alanine from L-aspartate: step 1/1. Functionally, catalyzes the pyruvoyl-dependent decarboxylation of aspartate to produce beta-alanine. The protein is Aspartate 1-decarboxylase of Staphylococcus carnosus (strain TM300).